Here is a 282-residue protein sequence, read N- to C-terminus: HTH-type transcriptional activator RhaR (282 aa).

Residues 179 to 277 (DKLITRLAAS…GMTPSQWRHL (99 aa)) form the HTH araC/xylS-type domain. DNA-binding regions (H-T-H motif) lie at residues 196–217 (DKFC…RQQT) and 244–267 (ISDI…TRET).

In terms of assembly, binds DNA as a dimer.

The protein resides in the cytoplasm. Its function is as follows. Activates expression of the rhaSR operon in response to L-rhamnose. The protein is HTH-type transcriptional activator RhaR of Escherichia coli O1:K1 / APEC.